Here is a 356-residue protein sequence, read N- to C-terminus: tRNA N6-adenosine threonylcarbamoyltransferase (356 aa).

Fe cation is bound by residues H111 and H115. Residues 143–147, D178, G191, D195, and N286 contribute to the substrate site; that span reads LASGG. D314 lines the Fe cation pocket.

It belongs to the KAE1 / TsaD family. Requires Fe(2+) as cofactor.

The protein resides in the cytoplasm. The enzyme catalyses L-threonylcarbamoyladenylate + adenosine(37) in tRNA = N(6)-L-threonylcarbamoyladenosine(37) in tRNA + AMP + H(+). Its function is as follows. Required for the formation of a threonylcarbamoyl group on adenosine at position 37 (t(6)A37) in tRNAs that read codons beginning with adenine. Is involved in the transfer of the threonylcarbamoyl moiety of threonylcarbamoyl-AMP (TC-AMP) to the N6 group of A37, together with TsaE and TsaB. TsaD likely plays a direct catalytic role in this reaction. The polypeptide is tRNA N6-adenosine threonylcarbamoyltransferase (Sorangium cellulosum (strain So ce56) (Polyangium cellulosum (strain So ce56))).